A 205-amino-acid chain; its full sequence is MQAPPSFYEGDTLEVAKKLLGQKLVHIVDGIKRSGIIVEVEAYKGPDDKAAHSYGGRRTDRTEVMFGAPGHAYVYLIYGMYHCFNVITAPVGTPQGVLIRALEPVDGIEEIKLARYNKTDITKAQYKNLTNGPGKLCRALGITLEERGVSLQSDTLHIELVPEEEHISSQYKITAGPRINIDYAEEAVHYPWRFYYEGHPFVSKK.

It belongs to the DNA glycosylase MPG family.

The sequence is that of Putative 3-methyladenine DNA glycosylase from Bacillus cereus (strain ZK / E33L).